Reading from the N-terminus, the 517-residue chain is Ubiquitin carboxyl-terminal hydrolase 30 (517 aa).

Residues 1–35 lie on the Mitochondrial intermembrane side of the membrane; it reads MLSSRAQAARTAADKALQRFLRTGAAVRYKVMKNW. The helical transmembrane segment at 36-56 threads the bilayer; sequence GVIGGIAAALAAGIYVIWGPI. The Cytoplasmic portion of the chain corresponds to 57–517; sequence TERKKRRKGL…QQGREYRSEE (461 aa). The USP domain maps to 68 to 502; the sequence is PGLVNLGNTC…SAYLLFYERV (435 aa). Catalysis depends on C77, which acts as the Nucleophile. Glycyl lysine isopeptide (Lys-Gly) (interchain with G-Cter in ubiquitin) cross-links involve residues K235 and K289. The disordered stretch occupies residues 364 to 395; the sequence is SQHGPKATESPGSALGVQDTQAAPKPGLSQPA. H452 serves as the catalytic Proton acceptor.

It belongs to the peptidase C19 family. In terms of processing, ubiquitinated by parkin (PRKN) at Lys-235 and Lys-289, leading to its degradation.

It is found in the mitochondrion outer membrane. The catalysed reaction is Thiol-dependent hydrolysis of ester, thioester, amide, peptide and isopeptide bonds formed by the C-terminal Gly of ubiquitin (a 76-residue protein attached to proteins as an intracellular targeting signal).. With respect to regulation, inhibited by the diterpenoid derivative 15-oxospiramilactone (S3). Its function is as follows. Deubiquitinating enzyme tethered to the mitochondrial outer membrane that acts as a key inhibitor of mitophagy by counteracting the action of parkin (PRKN): hydrolyzes ubiquitin attached by parkin on target proteins, such as RHOT1/MIRO1 and TOMM20, thereby blocking parkin's ability to drive mitophagy. Preferentially cleaves 'Lys-6'- and 'Lys-11'-linked polyubiquitin chains, 2 types of linkage that participate in mitophagic signaling. Does not cleave efficiently polyubiquitin phosphorylated at 'Ser-65'. Acts as a negative regulator of mitochondrial fusion by mediating deubiquitination of MFN1 and MFN2. This chain is Ubiquitin carboxyl-terminal hydrolase 30 (Usp30), found in Rattus norvegicus (Rat).